Here is a 311-residue protein sequence, read N- to C-terminus: Formimidoylglutamase (311 aa).

His122, Asp151, His153, Asp155, Cys242, and Asp244 together coordinate Mn(2+).

The protein belongs to the arginase family. It depends on Mn(2+) as a cofactor.

The catalysed reaction is N-formimidoyl-L-glutamate + H2O = formamide + L-glutamate. It functions in the pathway amino-acid degradation; L-histidine degradation into L-glutamate; L-glutamate from N-formimidoyl-L-glutamate (hydrolase route): step 1/1. Catalyzes the conversion of N-formimidoyl-L-glutamate to L-glutamate and formamide. The sequence is that of Formimidoylglutamase from Pseudomonas aeruginosa (strain UCBPP-PA14).